We begin with the raw amino-acid sequence, 544 residues long: Terpene synthase 9 (544 aa).

Positions 296, 300, and 449 each coordinate Mg(2+). The DDXXD motif signature appears at 296 to 300 (DDTFD).

This sequence belongs to the terpene synthase family. Tpsa subfamily. Mg(2+) serves as cofactor. It depends on Mn(2+) as a cofactor.

It carries out the reaction (2E,6E)-farnesyl diphosphate = (1E,4E)-germacrene B + diphosphate. The enzyme catalyses (2E)-geranyl diphosphate = terpinolene + diphosphate. It catalyses the reaction (2E)-geranyl diphosphate = limonene + diphosphate. The catalysed reaction is (2E)-geranyl diphosphate = beta-myrcene + diphosphate. It carries out the reaction (2Z,6Z)-farnesyl diphosphate = germacrene A + diphosphate. The enzyme catalyses (2Z,6Z)-farnesyl diphosphate = alpha-humulene + diphosphate. Its pathway is secondary metabolite biosynthesis; terpenoid biosynthesis. Sesquiterpene synthase involved in the biosynthesis of volatile compounds. Mediates the conversion of (2E,6E)-farnesyl diphosphate (FPP) into (1E,4E)-germacrene B, but also smaller amounts of germacrene A and C, and of (2Z,6Z)-farnesyl diphosphate ((ZZ)-FPP) into alpha-humulene, germacrene A and germacrene B. Can act with a low efficiency as a monoterpene synthase with geranyl diphosphate (GPP) as substrate, thus producing beta-myrcene, limonene and terpinolene. This is Terpene synthase 9 from Solanum habrochaites (Wild tomato).